The following is a 440-amino-acid chain: MALLCLDGVFLSSAENDFVHRIQEELDRFLLQKQLSKVLLFPPLSSRLRYLIHRTAENFDLLSSFSVGEGWKRRTVICHQDIRVPSSDGLSGPCRAPASCPSRYHGPRPISNQGAAAVPRGARAGRWYRGRKPDQPLYVPRVLRRQEEWGLTSTSVLKREAPAGRDPEEPGDVGAGDPNSDQGLPVLMTQGTEDLKGPGQRCENEPLLDPVGPEPLGPESQSGKGDMVEMATRFGSTLQLDLEKGKESLLEKRLVAEEEEDEEEVEEDGPSSCSEDDYSELLQEITDNLTKKEIQIEKIHLDTSSFVEELPGEKDLAHVVEIYDFEPALKTEDLLATFSEFQEKGFRIQWVDDTHALGIFPCLASAAEALTREFSVLKIRPLTQGTKQSKLKALQRPKLLRLVKERPQTNATVARRLVARALGLQHKKKERPAVRGPLPP.

One can recognise an R3H domain in the interval 16 to 81; sequence NDFVHRIQEE…KRRTVICHQD (66 aa). The tract at residues 154 to 225 is disordered; that stretch reads TSVLKREAPA…LGPESQSGKG (72 aa). Basic and acidic residues predominate over residues 157–168; it reads LKREAPAGRDPE. A Phosphoserine modification is found at S236. The stretch at 242–300 forms a coiled coil; sequence LEKGKESLLEKRLVAEEEEDEEEVEEDGPSSCSEDDYSELLQEITDNLTKKEIQIEKIH. The disordered stretch occupies residues 254 to 276; that stretch reads LVAEEEEDEEEVEEDGPSSCSED. The span at 257-276 shows a compositional bias: acidic residues; that stretch reads EEEEDEEEVEEDGPSSCSED.

This is R3H and coiled-coil domain-containing protein 1 from Homo sapiens (Human).